The following is a 102-amino-acid chain: Phosphoribosyl-ATP pyrophosphatase (102 aa).

This sequence belongs to the PRA-PH family.

The protein localises to the cytoplasm. The enzyme catalyses 1-(5-phospho-beta-D-ribosyl)-ATP + H2O = 1-(5-phospho-beta-D-ribosyl)-5'-AMP + diphosphate + H(+). It functions in the pathway amino-acid biosynthesis; L-histidine biosynthesis; L-histidine from 5-phospho-alpha-D-ribose 1-diphosphate: step 2/9. In Jannaschia sp. (strain CCS1), this protein is Phosphoribosyl-ATP pyrophosphatase.